The chain runs to 249 residues: MTRKLVLLRHGQSQWNLDNRFTGWVDVDLTEQGRREAAAAGRLMREEGLQFDVAHTSVLKRAIHTLQGALAELEQDWLPANKSWRLNERHYGGLQGLDKAETAAKHGEEQVKVWRRSYDIPPPPMELEDPGHPIHDRRYAGLDRNALPGTESLATTLDRVLPYWHDAIAPQLKDGKTVLVTAHGNSLRALYKYLNNVSREEILELNIPTGIPLLFELNDDLTVQSFRYLGDPEAARKAAEAVANQGKAK.

Substrate is bound by residues 9–16 (RHGQSQWN), 22–23 (TG), arginine 61, 88–91 (ERHY), lysine 99, 115–116 (RR), and 184–185 (GN). The active-site Tele-phosphohistidine intermediate is the histidine 10. Glutamate 88 acts as the Proton donor/acceptor in catalysis.

Belongs to the phosphoglycerate mutase family. BPG-dependent PGAM subfamily. As to quaternary structure, homodimer.

The enzyme catalyses (2R)-2-phosphoglycerate = (2R)-3-phosphoglycerate. The protein operates within carbohydrate degradation; glycolysis; pyruvate from D-glyceraldehyde 3-phosphate: step 3/5. Functionally, catalyzes the interconversion of 2-phosphoglycerate and 3-phosphoglycerate. This is 2,3-bisphosphoglycerate-dependent phosphoglycerate mutase from Stenotrophomonas maltophilia (strain K279a).